The primary structure comprises 68 residues: MPQLNTTVWPTIIMSMLLALFLLMQLKTLNTHYHPPASPKLTNIKPHNNPWEHKWTKIYSLHSLPPQF.

Residues 8-24 (VWPTIIMSMLLALFLLM) form a helical membrane-spanning segment. At Lys54 the chain carries N6-acetyllysine; alternate. Residue Lys54 is modified to N6-succinyllysine; alternate. Lys57 carries the N6-acetyllysine modification.

This sequence belongs to the ATPase protein 8 family. In terms of assembly, F-type ATPases have 2 components, CF(1) - the catalytic core - and CF(0) - the membrane proton channel. Component of an ATP synthase complex composed of ATP5PB, ATP5MC1, ATP5F1E, ATP5PD, ATP5ME, ATP5PF, ATP5MF, MT-ATP6, MT-ATP8, ATP5F1A, ATP5F1B, ATP5F1D, ATP5F1C, ATP5PO, ATP5MG, ATP5MK and ATP5MJ. Interacts with PRICKLE3.

The protein localises to the mitochondrion membrane. Its function is as follows. Mitochondrial membrane ATP synthase (F(1)F(0) ATP synthase or Complex V) produces ATP from ADP in the presence of a proton gradient across the membrane which is generated by electron transport complexes of the respiratory chain. F-type ATPases consist of two structural domains, F(1) - containing the extramembraneous catalytic core and F(0) - containing the membrane proton channel, linked together by a central stalk and a peripheral stalk. During catalysis, ATP synthesis in the catalytic domain of F(1) is coupled via a rotary mechanism of the central stalk subunits to proton translocation. Part of the complex F(0) domain. Minor subunit located with subunit a in the membrane. This chain is ATP synthase protein 8 (MT-ATP8), found in Hylobates lar (Lar gibbon).